Here is a 201-residue protein sequence, read N- to C-terminus: LexA repressor (201 aa).

The H-T-H motif DNA-binding region spans 28–48 (LREIGGHLGINGTLGVMKHLD). Active-site for autocatalytic cleavage activity residues include S120 and K157.

This sequence belongs to the peptidase S24 family. As to quaternary structure, homodimer.

The enzyme catalyses Hydrolysis of Ala-|-Gly bond in repressor LexA.. In terms of biological role, represses a number of genes involved in the response to DNA damage (SOS response), including recA and lexA. In the presence of single-stranded DNA, RecA interacts with LexA causing an autocatalytic cleavage which disrupts the DNA-binding part of LexA, leading to derepression of the SOS regulon and eventually DNA repair. This chain is LexA repressor, found in Geotalea uraniireducens (strain Rf4) (Geobacter uraniireducens).